Here is a 373-residue protein sequence, read N- to C-terminus: Cell surface Cu-only superoxide dismutase ARB_03674 (373 aa).

The signal sequence occupies residues 1–55; it reads MIWKQPPRRMGEMGGSLSRRFGNAAASWAVWRVSRSCFSLLFFFYFFLFFSSSSL. 2 N-linked (GlcNAc...) asparagine glycosylation sites follow: N75 and N141. Cu cation is bound by residues H194, H196, and H212. A disulfide bridge connects residues C206 and C289. 2 N-linked (GlcNAc...) asparagine glycosylation sites follow: N254 and N274. A Cu cation-binding site is contributed by H280. Residues N283 and N291 are each glycosylated (N-linked (GlcNAc...) asparagine). The interval 329-348 is disordered; the sequence is GHAPTISATYTPTPTPSPPA. Low complexity predominate over residues 331-340; it reads APTISATYTP. Residue G352 is the site of GPI-anchor amidated glycine attachment. Positions 353-373 are cleaved as a propeptide — removed in mature form; sequence AGRLVGFSLGAIMAALVPLAL.

It belongs to the Cu-Zn superoxide dismutase family. Monomer. The cofactor is Cu cation. Post-translationally, the GPI-anchor is attached to the protein in the endoplasmic reticulum and serves to target the protein to the cell surface. There, the glucosamine-inositol phospholipid moiety is cleaved off and the GPI-modified mannoprotein is covalently attached via its lipidless GPI glycan remnant to the 1,6-beta-glucan of the outer cell wall layer.

It localises to the secreted. The protein resides in the cell wall. Its subcellular location is the cell membrane. The enzyme catalyses 2 superoxide + 2 H(+) = H2O2 + O2. Functionally, superoxide dismutases serve to convert damaging superoxide radicals, a key form of ROS, to less damaging hydrogen peroxide that can be converted into water by catalase action. Degrades host-derived reactive oxygen species to escape innate immune surveillance. Involved in the occurrence of miconazole-tolerant persisters in biofilms. Persisters are cells that survive high doses of an antimicrobial agent. The unusual attributes of SOD5-like fungal proteins, including the absence of zinc and an open active site that readily captures extracellular copper, make these SODs well suited to meet challenges in zinc and copper availability at the host-pathogen interface. In Arthroderma benhamiae (strain ATCC MYA-4681 / CBS 112371) (Trichophyton mentagrophytes), this protein is Cell surface Cu-only superoxide dismutase ARB_03674.